The following is a 148-amino-acid chain: Small ribosomal subunit protein uS9 (148 aa).

This sequence belongs to the universal ribosomal protein uS9 family.

In Aedes aegypti (Yellowfever mosquito), this protein is Small ribosomal subunit protein uS9 (RpS16).